The chain runs to 195 residues: Large ribosomal subunit protein uL18 (195 aa).

Belongs to the universal ribosomal protein uL18 family. As to quaternary structure, part of the 50S ribosomal subunit. Contacts the 5S and 23S rRNAs.

This is one of the proteins that bind and probably mediate the attachment of the 5S RNA into the large ribosomal subunit, where it forms part of the central protuberance. The protein is Large ribosomal subunit protein uL18 of Metallosphaera sedula (strain ATCC 51363 / DSM 5348 / JCM 9185 / NBRC 15509 / TH2).